The sequence spans 459 residues: tRNA modification GTPase MnmE (459 aa).

Residues arginine 22, glutamate 85, and arginine 124 each coordinate (6S)-5-formyl-5,6,7,8-tetrahydrofolate. Residues 221–380 (GLSTVIVGKP…LEIQIRDLFF (160 aa)) enclose the TrmE-type G domain. Asparagine 231 provides a ligand contact to K(+). GTP-binding positions include 231 to 236 (NVGKSS), 250 to 256 (TEVAGTT), and 275 to 278 (DTAG). Serine 235 serves as a coordination point for Mg(2+). Residues threonine 250, valine 252, and threonine 255 each contribute to the K(+) site. Threonine 256 is a Mg(2+) binding site. Lysine 459 is a (6S)-5-formyl-5,6,7,8-tetrahydrofolate binding site.

This sequence belongs to the TRAFAC class TrmE-Era-EngA-EngB-Septin-like GTPase superfamily. TrmE GTPase family. As to quaternary structure, homodimer. Heterotetramer of two MnmE and two MnmG subunits. K(+) serves as cofactor.

Its subcellular location is the cytoplasm. In terms of biological role, exhibits a very high intrinsic GTPase hydrolysis rate. Involved in the addition of a carboxymethylaminomethyl (cmnm) group at the wobble position (U34) of certain tRNAs, forming tRNA-cmnm(5)s(2)U34. This is tRNA modification GTPase MnmE from Staphylococcus aureus (strain USA300 / TCH1516).